A 477-amino-acid chain; its full sequence is UDP-N-acetylmuramate--L-alanine ligase (477 aa).

Position 122–128 (122–128 (GTHGKTT)) interacts with ATP.

Belongs to the MurCDEF family.

It localises to the cytoplasm. The enzyme catalyses UDP-N-acetyl-alpha-D-muramate + L-alanine + ATP = UDP-N-acetyl-alpha-D-muramoyl-L-alanine + ADP + phosphate + H(+). It participates in cell wall biogenesis; peptidoglycan biosynthesis. Cell wall formation. The sequence is that of UDP-N-acetylmuramate--L-alanine ligase from Xylella fastidiosa (strain 9a5c).